The following is a 405-amino-acid chain: MSVEHAAVQRADFDQVMVPNYAPAGFIPVRGAGSRVWDQAGRELVDFSGGIAVNVLGHCHPALVGALTEQANNLWHVSNVFTNEPTLRLAKKLVDSTFAERVFFCNSGAEANEAAFKLARRVAHDLYGPEKYEIIAAVNSFHGRTLFTVSVGGQPKYSDGFGPKITGISHVPYNDLEALKAAVTDKTCAVVLEPIQGEGGVLPGELDYLQGARKLCDEHNALLVFDEVQSGMGRSGHLFAYMHYGVTPDILSSAKSIGGGFPLAAMLTTEKLAKHFAVGVHGTTYGGNPLACAVGEAVIDVINTPEVLAGVQRKHQQFKTRLESIGQQYGVFTEVRGLGLLIGCVLSDAWKGKAKDIFNAAEAQDLMILQAGPDVIRFAPSLVIEDADIEEGLNRFERAIAKLTS.

Pyridoxal 5'-phosphate is bound by residues 108–109 (GA) and Phe141. Arg144 serves as a coordination point for N(2)-acetyl-L-ornithine. Position 226–229 (226–229 (DEVQ)) interacts with pyridoxal 5'-phosphate. At Lys255 the chain carries N6-(pyridoxal phosphate)lysine. Residue Thr283 participates in N(2)-acetyl-L-ornithine binding. Position 284 (Thr284) interacts with pyridoxal 5'-phosphate.

It belongs to the class-III pyridoxal-phosphate-dependent aminotransferase family. ArgD subfamily. In terms of assembly, homodimer. It depends on pyridoxal 5'-phosphate as a cofactor.

The protein resides in the cytoplasm. The catalysed reaction is N(2)-acetyl-L-ornithine + 2-oxoglutarate = N-acetyl-L-glutamate 5-semialdehyde + L-glutamate. Its pathway is amino-acid biosynthesis; L-arginine biosynthesis; N(2)-acetyl-L-ornithine from L-glutamate: step 4/4. This is Acetylornithine aminotransferase 1 from Pseudomonas syringae pv. tomato (strain ATCC BAA-871 / DC3000).